A 425-amino-acid chain; its full sequence is Dihydroorotase (425 aa).

Positions 61 and 63 each coordinate Zn(2+). Substrate contacts are provided by residues 63–65 and Asn95; that span reads HLR. The Zn(2+) site is built by Asp153, His180, and His233. Residue Asn279 coordinates substrate. Asp306 contacts Zn(2+). Asp306 is a catalytic residue. His310 is a binding site for substrate.

The protein belongs to the metallo-dependent hydrolases superfamily. DHOase family. Class I DHOase subfamily. Zn(2+) serves as cofactor.

It catalyses the reaction (S)-dihydroorotate + H2O = N-carbamoyl-L-aspartate + H(+). The protein operates within pyrimidine metabolism; UMP biosynthesis via de novo pathway; (S)-dihydroorotate from bicarbonate: step 3/3. Its function is as follows. Catalyzes the reversible cyclization of carbamoyl aspartate to dihydroorotate. The protein is Dihydroorotase of Geotalea daltonii (strain DSM 22248 / JCM 15807 / FRC-32) (Geobacter daltonii).